Consider the following 339-residue polypeptide: MYQLFRHGIFQMDAEKAHDFTIQCLKLAGNPLFQPILKSLIHAPKGFPKTVMGVNFPNPIGLAAGADKNGDAIDGFGALGFGFLEVGTVTPVAQDGNAKPRQFRLIEAEGIINRNGFNNNGIDYLIENVKNARYKGVIGINIGKNKFTPLEQGKDDYIFCLNKAYNYAGYITVNISSPNTPDLRQLQYGDYFDDLLRSIKDRQAILANQYNKYVPIAVKIAPDLTESELVQIADTLVRHKMDGVIATNTTISRDTVMGMKNAEQQGGLSGKPLQHKSTEIIKRLHQELKGQIPIIGSGGIDGLQNAQEKIEAGAELLQVYSGLIYHGPKLVKELVKNIK.

Residues 64-68 (AGADK) and Thr88 each bind FMN. Lys68 contacts substrate. Position 113 to 117 (113 to 117 (NRNGF)) interacts with substrate. FMN contacts are provided by Asn141 and Asn174. A substrate-binding site is contributed by Asn174. Ser177 (nucleophile) is an active-site residue. Asn179 contributes to the substrate binding site. Residues Lys219 and Thr247 each contribute to the FMN site. Residue 248 to 249 (NT) coordinates substrate. FMN is bound by residues Gly270, Gly299, and 320-321 (YS).

This sequence belongs to the dihydroorotate dehydrogenase family. Type 2 subfamily. Monomer. The cofactor is FMN.

It localises to the cell membrane. The catalysed reaction is (S)-dihydroorotate + a quinone = orotate + a quinol. It participates in pyrimidine metabolism; UMP biosynthesis via de novo pathway; orotate from (S)-dihydroorotate (quinone route): step 1/1. Functionally, catalyzes the conversion of dihydroorotate to orotate with quinone as electron acceptor. This is Dihydroorotate dehydrogenase (quinone) from Haemophilus influenzae (strain PittGG).